The chain runs to 272 residues: MKTVSQLIDMKQKETKISMVTAYDFPSAKQVEAAGIDMILVGDSLGMTVLGYESTVQVTLADMIHHGRAVRRGAPNTFVVVDMPIGAVGISMTQDLNHALKLYQETNANAIKAEGAHITPFIEKATAIGIPVVAHLGLTPQSVGVMGYKLQGATKEAAEQLILDAKNVEQAGAVALVLEAIPNDLAEEISKHLTIPVIGIGAGKGTDGQVLVYHDMLNYGVEHKAKFVKQFADFSVGVDGLKQYDQEVKSGAFPSEEYTYKKKIMNEVNNND.

2 residues coordinate Mg(2+): aspartate 43 and aspartate 82. 3-methyl-2-oxobutanoate is bound by residues 43–44 (DS), aspartate 82, and lysine 112. A Mg(2+)-binding site is contributed by glutamate 114. Glutamate 179 serves as the catalytic Proton acceptor.

The protein belongs to the PanB family. Homodecamer; pentamer of dimers. Mg(2+) serves as cofactor.

It is found in the cytoplasm. The enzyme catalyses 3-methyl-2-oxobutanoate + (6R)-5,10-methylene-5,6,7,8-tetrahydrofolate + H2O = 2-dehydropantoate + (6S)-5,6,7,8-tetrahydrofolate. Its pathway is cofactor biosynthesis; (R)-pantothenate biosynthesis; (R)-pantoate from 3-methyl-2-oxobutanoate: step 1/2. Functionally, catalyzes the reversible reaction in which hydroxymethyl group from 5,10-methylenetetrahydrofolate is transferred onto alpha-ketoisovalerate to form ketopantoate. The chain is 3-methyl-2-oxobutanoate hydroxymethyltransferase from Staphylococcus aureus (strain COL).